We begin with the raw amino-acid sequence, 301 residues long: Phosducin-like protein (301 aa).

T2 bears the N-acetylthreonine mark. The interval 15 to 53 is disordered; that stretch reads YYYSSSEEEDSDHEDKDRGRGALAGSSMPADADLAGEGI. A phosphoserine mark is found at S20, S25, S226, S293, and S296. Residues 37–299 enclose the Phosducin domain; it reads LAGSSMPADA…TCHSEDSDLE (263 aa). Residues 158-301 are thioredoxin fold; it reads FKQVFEIPSG…HSEDSDLEID (144 aa).

Belongs to the phosducin family. Forms a complex with the beta and gamma subunits of the GTP-binding protein, transducin. Interacts with the CCT chaperonin complex.

The protein resides in the cell projection. The protein localises to the cilium. Functions as a co-chaperone for CCT in the assembly of heterotrimeric G protein complexes, facilitates the assembly of both Gbeta-Ggamma and RGS-Gbeta5 heterodimers. Also acts as a positive regulator of hedgehog signaling and regulates ciliary function. This chain is Phosducin-like protein (PDCL), found in Bos taurus (Bovine).